The sequence spans 78 residues: Defensin-like protein 171 (78 aa).

Residues 1 to 23 (MAKTASSLVLPIIFLVMFALVEQ) form the signal peptide. 4 disulfide bridges follow: Cys27–Cys71, Cys34–Cys56, Cys40–Cys65, and Cys44–Cys67.

Belongs to the DEFL family.

Its subcellular location is the secreted. The sequence is that of Defensin-like protein 171 (LCR61) from Arabidopsis thaliana (Mouse-ear cress).